The chain runs to 299 residues: N-acetylmuramic acid 6-phosphate etherase (299 aa).

Residues 54–217 (TIAQYKKGGR…STITMVGVGK (164 aa)) enclose the SIS domain. The active-site Proton donor is the glutamate 82. Glutamate 113 is an active-site residue.

It belongs to the GCKR-like family. MurNAc-6-P etherase subfamily. As to quaternary structure, homodimer.

The catalysed reaction is N-acetyl-D-muramate 6-phosphate + H2O = N-acetyl-D-glucosamine 6-phosphate + (R)-lactate. Its pathway is amino-sugar metabolism; N-acetylmuramate degradation. Its function is as follows. Specifically catalyzes the cleavage of the D-lactyl ether substituent of MurNAc 6-phosphate, producing GlcNAc 6-phosphate and D-lactate. This chain is N-acetylmuramic acid 6-phosphate etherase, found in Staphylococcus aureus (strain bovine RF122 / ET3-1).